The following is a 435-amino-acid chain: Methylenetetrahydrofolate--tRNA-(uracil-5-)-methyltransferase TrmFO (435 aa).

Residue 7-12 participates in FAD binding; sequence GAGLAG.

The protein belongs to the MnmG family. TrmFO subfamily. FAD is required as a cofactor.

The protein localises to the cytoplasm. The catalysed reaction is uridine(54) in tRNA + (6R)-5,10-methylene-5,6,7,8-tetrahydrofolate + NADH + H(+) = 5-methyluridine(54) in tRNA + (6S)-5,6,7,8-tetrahydrofolate + NAD(+). The enzyme catalyses uridine(54) in tRNA + (6R)-5,10-methylene-5,6,7,8-tetrahydrofolate + NADPH + H(+) = 5-methyluridine(54) in tRNA + (6S)-5,6,7,8-tetrahydrofolate + NADP(+). Catalyzes the folate-dependent formation of 5-methyl-uridine at position 54 (M-5-U54) in all tRNAs. This Thermotoga sp. (strain RQ2) protein is Methylenetetrahydrofolate--tRNA-(uracil-5-)-methyltransferase TrmFO.